Consider the following 106-residue polypeptide: MGFSGKTYHQFDRKFSETTEGKKCVITGISLHSTVKPISLSSSAVSNTEDEDLCPTTPTADSVRIPTVIPCPPAPKKRKLTLKVSYGPREFFSPPDLETVFIYRTT.

Functionally, probable cyclin-dependent protein kinase (CDK) inhibitor that functions as a repressor of mitosis in the endoreduplication cell cycle. This chain is Cyclin-dependent protein kinase inhibitor SMR15, found in Arabidopsis thaliana (Mouse-ear cress).